A 589-amino-acid polypeptide reads, in one-letter code: MDRRNGGDPLAPPRPPKLLPRVHRPRAPEPTLSGVDHNAGATASALASGASSAAPVAIHNNNSQQQLSISAAASNNNTISIIPASPDFDDYQIHHLTFLPQRPSSLSRNSSTASSTTATGISVSGSGSVSGSSSSFTRRRPPAPVPLNNSISNNNNNSINNNFLSHFQSAEPASNALGQPPASPVTLAQPRPESERLTNEYVDTPLQHATRSQHPAGQQDNGQTTTHHLLLLPQRNQHLHLQQHQQHLQQQQQQQQQQQQQQHLQHQQNQQHARLATTTQATSVGSDHTDGLLHSHLQNSTTKPPASKQPAPPRLGMGLGLGLGLGLNQPIITKQPTPATQKERMHALEELLQPGGAGGNGGPLVMAGDPSLLNPIVCPRCGRCRCEQCQSPRPLPQTWVCNKTCLCSAESVIDYASCLCCAKALFYHCARDNDLDCDDGNGTPCVDNPCSCGPYKRTQRWGWLGALSIFLPCLWFYWPMRGCMKLCEKCYGRFAGRGCRCQGIGGGGAGSGGGVGSIGSTSSMLPIVPLGVNGSGLGGGVSLSGGVTDGGLNQANGKAMDHGCSAARSILRKGDLTPEKRLLDSSPDY.

Disordered regions lie at residues methionine 1–histidine 37, arginine 102–serine 194, and leucine 239–glycine 320. Low complexity-rich tracts occupy residues serine 104–serine 135 and asparagine 148–asparagine 162. Over residues phenylalanine 163–proline 172 the composition is skewed to polar residues. Residues leucine 239–histidine 272 are compositionally biased toward low complexity. Polar residues predominate over residues alanine 276 to serine 286. The SPR domain maps to arginine 380–cysteine 499.

Belongs to the sprouty family. Interacts with DRK and RasGAP1 proteins of the Ras pathway. In terms of tissue distribution, in ovary, expressed from stage 7 of oogenesis in the posterior follicle cells and during stage 9 when the follicle cells migrate posteriorly over the oocyte nucleus, expression is seen in the dorsal and lateral cells and is excluded from the ventral cells. Once the migration of follicle cells is complete expressed in the dorsal-anterior corner of the egg chamber. Expressed in the embryonic tracheal system, developing eye imaginal disk, embryonic chordotonal organ precursors, midline glia and wing imaginal disk.

It localises to the cell membrane. Its function is as follows. Inhibitor of tracheal branching that restricts branch budding by antagonizing the BNL-FGF pathway (BNL: branchless, an fgf inducer of branching). Acts as an antagonist of EGFR-mediated signaling in the eye (where it is important for cell determination) midline glia, chordotonal organs, wing and ovarian follicle cells. The chain is Protein sprouty (sty) from Drosophila melanogaster (Fruit fly).